Consider the following 367-residue polypeptide: Cytochrome b (367 aa).

4 helical membrane passes run 33-53, 77-98, 113-133, and 178-198; these read FGSL…FLAM, WVLR…YLHI, WNMG…GYVL, and FFAF…VHLL. Heme b-binding residues include H83 and H97. 2 residues coordinate heme b: H182 and H196. H201 lines the a ubiquinone pocket. 4 consecutive transmembrane segments (helical) span residues 226–246, 288–308, 320–340, and 347–367; these read IKDI…VLFS, LGGV…PFLH, FSQC…WIGG, and YIII…VIMP.

It belongs to the cytochrome b family. The cytochrome bc1 complex contains 11 subunits: 3 respiratory subunits (MT-CYB, CYC1 and UQCRFS1), 2 core proteins (UQCRC1 and UQCRC2) and 6 low-molecular weight proteins (UQCRH/QCR6, UQCRB/QCR7, UQCRQ/QCR8, UQCR10/QCR9, UQCR11/QCR10 and a cleavage product of UQCRFS1). This cytochrome bc1 complex then forms a dimer. Requires heme b as cofactor.

It localises to the mitochondrion inner membrane. Functionally, component of the ubiquinol-cytochrome c reductase complex (complex III or cytochrome b-c1 complex) that is part of the mitochondrial respiratory chain. The b-c1 complex mediates electron transfer from ubiquinol to cytochrome c. Contributes to the generation of a proton gradient across the mitochondrial membrane that is then used for ATP synthesis. The protein is Cytochrome b (MT-CYB) of Hypsugo savii (Savi's pipistrelle).